We begin with the raw amino-acid sequence, 187 residues long: Ponticulin-like protein K (187 aa).

A signal peptide spans 1–19 (MKNLILLFLLISIINLIQS). N-linked (GlcNAc...) asparagine glycans are attached at residues asparagine 31, asparagine 70, asparagine 86, asparagine 93, asparagine 119, asparagine 128, asparagine 146, asparagine 160, and asparagine 161. The span at 115–146 (PSPSNSSNPSPSPNTTSSSSLSSSSLNSNEPN) shows a compositional bias: low complexity. The segment at 115–161 (PSPSNSSNPSPSPNTTSSSSLSSSSLNSNEPNQTTKPPKTNEPQKNN) is disordered. Over residues 147–161 (QTTKPPKTNEPQKNN) the composition is skewed to polar residues. Asparagine 161 carries the GPI-like-anchor amidated asparagine lipid modification. A propeptide spans 162–187 (STSNIPNFFAIFGFLVLIIFILGDKI) (removed in mature form).

The protein belongs to the ponticulin family. In terms of processing, the GPI-like-anchor contains a phosphoceramide group, rather than a phosphatidyl group.

The protein localises to the cell membrane. Functionally, binds F-actin and nucleates actin assembly. This chain is Ponticulin-like protein K (ponK), found in Dictyostelium discoideum (Social amoeba).